Reading from the N-terminus, the 506-residue chain is ATP synthase subunit alpha (506 aa).

Residue 171–178 participates in ATP binding; the sequence is GDRKTGKT.

This sequence belongs to the ATPase alpha/beta chains family. As to quaternary structure, F-type ATPases have 2 components, CF(1) - the catalytic core - and CF(0) - the membrane proton channel. CF(1) has five subunits: alpha(3), beta(3), gamma(1), delta(1), epsilon(1). CF(0) has three main subunits: a(1), b(2) and c(9-12). The alpha and beta chains form an alternating ring which encloses part of the gamma chain. CF(1) is attached to CF(0) by a central stalk formed by the gamma and epsilon chains, while a peripheral stalk is formed by the delta and b chains.

It is found in the cell inner membrane. The catalysed reaction is ATP + H2O + 4 H(+)(in) = ADP + phosphate + 5 H(+)(out). Functionally, produces ATP from ADP in the presence of a proton gradient across the membrane. The alpha chain is a regulatory subunit. The polypeptide is ATP synthase subunit alpha (Anaplasma phagocytophilum (strain HZ)).